Reading from the N-terminus, the 311-residue chain is Heme A synthase (311 aa).

At 1–6 the chain is on the cytoplasmic side; the sequence is MQRFIK. The chain crosses the membrane as a helical span at residues 7–27; that stretch reads WLAVITSLDLLVVLLGGALVT. Residues 28–62 lie on the Extracellular side of the membrane; sequence KTGSGQGCGKSWPLCNGEFVPSNLSMETIIELSHR. Cys35 and Cys42 are oxidised to a cystine. The active site involves Glu58. His61 contributes to the heme o binding site. The helical transmembrane segment at 63–83 threads the bilayer; the sequence is LTSGSAGILVTLLCILSWKYY. The Cytoplasmic portion of the chain corresponds to 84–91; it reads KHVRETKT. The helical transmembrane segment at 92–112 threads the bilayer; sequence LAILSFVFLVAQALMGAAAVV. At 113–121 the chain is on the extracellular side; that stretch reads WGQMPAVLA. The chain crosses the membrane as a helical span at residues 122 to 142; it reads IHFGISLISFASVILLTCLIF. His123 contributes to the heme o binding site. Residues 143 to 159 are Cytoplasmic-facing; it reads EIDQKFDARSLIMDKKM. A helical membrane pass occupies residues 160–180; sequence KFHIYGVTIYSYIVVYTGALV. Topologically, residues 181–211 are extracellular; that stretch reads RHERATLACPDFPLCSKSRPMPTQLHEWVQM. Cysteines 189 and 195 form a disulfide. A helical membrane pass occupies residues 212–232; the sequence is GHRVAAMLIFAWILYAMIIAI. His213 provides a ligand contact to heme b. Topologically, residues 233 to 243 are cytoplasmic; it reads RHYKQQRVVYW. The chain crosses the membrane as a helical span at residues 244-264; sequence GWIISFILVTLQAIVGILVVF. Residues 265-271 are Extracellular-facing; it reads TNASLAM. The chain crosses the membrane as a helical span at residues 272 to 292; it reads ALLHSLFISCLFAVLCYLVMI. Position 275 (His275) interacts with heme b. Residues 293 to 311 lie on the Cytoplasmic side of the membrane; that stretch reads GTRSTVNAKETESTSKQTK.

It belongs to the COX15/CtaA family. Type 1 subfamily. In terms of assembly, interacts with CtaB. Heme b serves as cofactor.

Its subcellular location is the cell membrane. The catalysed reaction is Fe(II)-heme o + 2 A + H2O = Fe(II)-heme a + 2 AH2. It functions in the pathway porphyrin-containing compound metabolism; heme A biosynthesis; heme A from heme O: step 1/1. Its function is as follows. Catalyzes the conversion of heme O to heme A by two successive hydroxylations of the methyl group at C8. The first hydroxylation forms heme I, the second hydroxylation results in an unstable dihydroxymethyl group, which spontaneously dehydrates, resulting in the formyl group of heme A. This chain is Heme A synthase, found in Bacillus mycoides (strain KBAB4) (Bacillus weihenstephanensis).